A 232-amino-acid polypeptide reads, in one-letter code: Ion-translocating oxidoreductase complex subunit E (232 aa).

The next 6 helical transmembrane spans lie at 18-38 (GLVQ…LTNA), 39-59 (LGLG…VSLV), 69-89 (IPVF…LINA), 93-113 (GLYL…IIIG), 127-147 (AAFD…VLGA), and 182-202 (PFLL…LIAL).

Belongs to the NqrDE/RnfAE family. In terms of assembly, the complex is composed of six subunits: RnfA, RnfB, RnfC, RnfD, RnfE and RnfG.

The protein localises to the cell inner membrane. Its function is as follows. Part of a membrane-bound complex that couples electron transfer with translocation of ions across the membrane. This is Ion-translocating oxidoreductase complex subunit E from Shewanella sp. (strain ANA-3).